A 368-amino-acid chain; its full sequence is Glutamate 5-kinase (368 aa).

Lys-10 lines the ATP pocket. 3 residues coordinate substrate: Ser-50, Asp-137, and Asn-149. 169–170 (TD) is an ATP binding site. The 79-residue stretch at 276 to 354 (RGTLVLDDGA…ESIVRELGYM (79 aa)) folds into the PUA domain.

This sequence belongs to the glutamate 5-kinase family.

It localises to the cytoplasm. It catalyses the reaction L-glutamate + ATP = L-glutamyl 5-phosphate + ADP. The protein operates within amino-acid biosynthesis; L-proline biosynthesis; L-glutamate 5-semialdehyde from L-glutamate: step 1/2. Functionally, catalyzes the transfer of a phosphate group to glutamate to form L-glutamate 5-phosphate. This is Glutamate 5-kinase from Pseudomonas savastanoi pv. phaseolicola (strain 1448A / Race 6) (Pseudomonas syringae pv. phaseolicola (strain 1448A / Race 6)).